A 435-amino-acid polypeptide reads, in one-letter code: Protein translocase subunit SecY (435 aa).

A run of 10 helical transmembrane segments spans residues 19–39, 68–88, 116–136, 147–167, 179–199, 216–236, 269–289, 311–331, 372–392, and 395–415; these read ILFT…TVPG, FSVF…VQLL, YIAL…FDTL, VQTY…VTWL, GVSM…IKGI, FIFV…TTFV, VIPV…FQVV, ISGM…YTFV, VGSL…DVFG, and DAVA…IEGM.

The protein belongs to the SecY/SEC61-alpha family. As to quaternary structure, component of the Sec protein translocase complex. Heterotrimer consisting of SecY, SecE and SecG subunits. The heterotrimers can form oligomers, although 1 heterotrimer is thought to be able to translocate proteins. Interacts with the ribosome. Interacts with SecDF, and other proteins may be involved. Interacts with SecA.

The protein localises to the cell membrane. The central subunit of the protein translocation channel SecYEG. Consists of two halves formed by TMs 1-5 and 6-10. These two domains form a lateral gate at the front which open onto the bilayer between TMs 2 and 7, and are clamped together by SecE at the back. The channel is closed by both a pore ring composed of hydrophobic SecY resides and a short helix (helix 2A) on the extracellular side of the membrane which forms a plug. The plug probably moves laterally to allow the channel to open. The ring and the pore may move independently. This is Protein translocase subunit SecY from Streptococcus sanguinis (strain SK36).